The following is a 154-amino-acid chain: MGGGLSTLEQKLTEMITAPVEALGYELVGIEFIRGRTSTLRIYIDSEDGINVDDCADVSHQVSAVLDVEDPISVAYNLEVSSPGLDRPMFTADHYARFQGEEVALVLRMAVQNRRKWQGIIKAVDGEMITVTVEGKDEVFALSNIQKANLVPHF.

Belongs to the RimP family.

It localises to the cytoplasm. Functionally, required for maturation of 30S ribosomal subunits. This Salmonella gallinarum (strain 287/91 / NCTC 13346) protein is Ribosome maturation factor RimP.